Consider the following 309-residue polypeptide: MRENNQSSTLEFILLGVTGQQEQEDFFYILFLFIYPITLIGNLLIVLAICSDVHLHNPMYFLLANLSLVDIFFSSVTIPKMLANHLLGSKSISFGGCLTQMYFMIALGNTDSYILAAMAYDRAVAISRPLHYTTIMSPRSCIWLIAGSWVIGNANALPHTLLTASLSFCGNQEVANFYCDITPLLKLSCSDIHFHVKMMYLGVGIFSVPLLCIIVSYIRVFSTVFQVPSTKGVLKAFSTCGSHLTVVSLYYGTVMGMYFRPLTNYSLKDAVITVMYTAVTPMLNPFIYSLRNRDVKAALRKLFNKRISS.

The Extracellular segment spans residues 1 to 25 (MRENNQSSTLEFILLGVTGQQEQED). N5 is a glycosylation site (N-linked (GlcNAc...) asparagine). Residues 26-49 (FFYILFLFIYPITLIGNLLIVLAI) form a helical membrane-spanning segment. The Cytoplasmic segment spans residues 50-57 (CSDVHLHN). A helical membrane pass occupies residues 58–79 (PMYFLLANLSLVDIFFSSVTIP). Topologically, residues 80–100 (KMLANHLLGSKSISFGGCLTQ) are extracellular. C97 and C189 are joined by a disulfide. A helical transmembrane segment spans residues 101-120 (MYFMIALGNTDSYILAAMAY). The Cytoplasmic segment spans residues 121-139 (DRAVAISRPLHYTTIMSPR). The chain crosses the membrane as a helical span at residues 140–158 (SCIWLIAGSWVIGNANALP). Residues 159 to 195 (HTLLTASLSFCGNQEVANFYCDITPLLKLSCSDIHFH) are Extracellular-facing. Residues 196–218 (VKMMYLGVGIFSVPLLCIIVSYI) form a helical membrane-spanning segment. Residues 219–235 (RVFSTVFQVPSTKGVLK) lie on the Cytoplasmic side of the membrane. A helical membrane pass occupies residues 236–258 (AFSTCGSHLTVVSLYYGTVMGMY). Residues 259-270 (FRPLTNYSLKDA) lie on the Extracellular side of the membrane. An N-linked (GlcNAc...) asparagine glycan is attached at N264. Residues 271–290 (VITVMYTAVTPMLNPFIYSL) traverse the membrane as a helical segment. Residues 291–309 (RNRDVKAALRKLFNKRISS) are Cytoplasmic-facing.

The protein belongs to the G-protein coupled receptor 1 family.

The protein localises to the cell membrane. Functionally, odorant receptor. The chain is Olfactory receptor 1A1 (OR1A1) from Pan troglodytes (Chimpanzee).